The following is a 255-amino-acid chain: Keratin-associated protein 10-2 (255 aa).

22 consecutive repeat copies span residues 26–30 (CCELP), 36–40 (CCAPA), 57–61 (CCQAA), 79–83 (CCQQS), 89–93 (CCTSS), 99–103 (CCVPV), 104–108 (CCKPV), 109–113 (CCVPV), 114–118 (CCGAS), 120–124 (CCQQS), 130–134 (CCASS), 145–149 (CCKAV), 150–154 (CCVPT), 162–166 (CCQQS), 172–176 (CCTSS), 182–186 (CCVSV), 187–191 (CCKPV), 192–196 (CCKSI), 197–201 (CCVPV), 209–213 (CCQQS), 219–223 (CCTSS), and 224–228 (CCRPS). Residues 26 to 228 (CCELPCGTPS…CCTSSCCRPS (203 aa)) are 22 X 5 AA repeats of C-C-X(3).

This sequence belongs to the KRTAP type 10 family. As to quaternary structure, interacts with hair keratins. In terms of tissue distribution, restricted to a narrow region of the hair fiber cuticle, lying approximately 20 cell layers above the apex of the dermal papilla of the hair root; not detected in any other tissues.

In the hair cortex, hair keratin intermediate filaments are embedded in an interfilamentous matrix, consisting of hair keratin-associated proteins (KRTAP), which are essential for the formation of a rigid and resistant hair shaft through their extensive disulfide bond cross-linking with abundant cysteine residues of hair keratins. The matrix proteins include the high-sulfur and high-glycine-tyrosine keratins. This chain is Keratin-associated protein 10-2 (KRTAP10-2), found in Homo sapiens (Human).